Consider the following 1270-residue polypeptide: Microtubule-associated tumor suppressor 1 (1270 aa).

Residues 1 to 14 are compositionally biased toward acidic residues; the sequence is MTDDNSDDKIEDEL. 2 disordered regions span residues 1-50 and 184-236; these read MTDD…NSAN and FHTA…VTPS. A compositionally biased stretch (low complexity) spans 38–50; it reads NSSASSVNWNSAN. T186 is subject to Phosphothreonine. A compositionally biased stretch (low complexity) spans 197 to 211; that stretch reads SGSTSSLSYSTWTSS. The segment covering 212-228 has biased composition (basic and acidic residues); that stretch reads HSDKTHARETTYDRESF. Phosphoserine occurs at positions 381, 399, and 443. Disordered stretches follow at residues 524–560 and 592–622; these read DAAL…PRSD and THSK…SSSN. The segment covering 533-556 has biased composition (polar residues); it reads RPQQTSASSPSSVNSRQQTVLSRT. At S629 the chain carries Phosphoserine. Composition is skewed to polar residues over residues 701–710, 759–776, and 797–815; these read SKTTTTSGRN, VSSS…SSWV, and TGST…TYSN. Positions 701–815 are disordered; that stretch reads SKTTTTSGRN…THSELSTYSN (115 aa). A coiled-coil region spans residues 940–1231; it reads IQHLLSEREE…RLSMENEELL (292 aa). Residues S1203, S1224, S1245, S1255, S1259, S1261, S1264, and S1268 each carry the phosphoserine modification. The tract at residues 1237-1270 is disordered; the sequence is GDLCSPKRSPTSSAIPLQSPRNSGSFPSPSISPR. Over residues 1244-1270 the composition is skewed to polar residues; that stretch reads RSPTSSAIPLQSPRNSGSFPSPSISPR.

The protein belongs to the MTUS1 family. Homodimer. Interacts with AGTR2. Interacts with PTPN6. Isoform 1 associates with microtubules. Ubiquitously expressed (at protein level). Highly expressed in brain. Down-regulated in ovarian carcinoma, pancreas carcinoma, colon carcinoma and head and neck squamous cell carcinoma (HNSCC). Isoform 1 is the major isoform in most peripheral tissues. Isoform 2 is abundant in most peripheral tissues. Isoform 3 is the major isoform in brain, female reproductive tissues, thyroid and heart. Within brain it is highly expressed in corpus callosum and pons. Isoform 6 is brain-specific, it is the major isoform in cerebellum and fetal brain.

It is found in the mitochondrion. The protein localises to the golgi apparatus. Its subcellular location is the cell membrane. The protein resides in the nucleus. It localises to the cytoplasm. It is found in the cytoskeleton. The protein localises to the microtubule organizing center. Its subcellular location is the centrosome. The protein resides in the spindle. In terms of biological role, cooperates with AGTR2 to inhibit ERK2 activation and cell proliferation. May be required for AGTR2 cell surface expression. Together with PTPN6, induces UBE2V2 expression upon angiotensin-II stimulation. Isoform 1 inhibits breast cancer cell proliferation, delays the progression of mitosis by prolonging metaphase and reduces tumor growth. The protein is Microtubule-associated tumor suppressor 1 (MTUS1) of Homo sapiens (Human).